Here is a 129-residue protein sequence, read N- to C-terminus: Prefoldin subunit 4 (129 aa).

An N-acetylmethionine modification is found at Met-1.

Belongs to the prefoldin subunit beta family. Heterohexamer of two PFD-alpha type and four PFD-beta type subunits.

In terms of biological role, binds specifically to cytosolic chaperonin (c-CPN) and transfers target proteins to it. Binds to nascent polypeptide chain and promotes folding in an environment in which there are many competing pathways for nonnative proteins. The sequence is that of Prefoldin subunit 4 (GIM3) from Saccharomyces cerevisiae (strain ATCC 204508 / S288c) (Baker's yeast).